The following is a 34-amino-acid chain: Photosystem II reaction center protein T (34 aa).

Residues 3–23 (ALVYTFLLVSTLGIIFFAIFF) form a helical membrane-spanning segment.

It belongs to the PsbT family. In terms of assembly, PSII is composed of 1 copy each of membrane proteins PsbA, PsbB, PsbC, PsbD, PsbE, PsbF, PsbH, PsbI, PsbJ, PsbK, PsbL, PsbM, PsbT, PsbY, PsbZ, Psb30/Ycf12, at least 3 peripheral proteins of the oxygen-evolving complex and a large number of cofactors. It forms dimeric complexes.

The protein localises to the plastid. It localises to the chloroplast thylakoid membrane. Its function is as follows. Found at the monomer-monomer interface of the photosystem II (PS II) dimer, plays a role in assembly and dimerization of PSII. PSII is a light-driven water plastoquinone oxidoreductase, using light energy to abstract electrons from H(2)O, generating a proton gradient subsequently used for ATP formation. The sequence is that of Photosystem II reaction center protein T from Solanum lycopersicum (Tomato).